We begin with the raw amino-acid sequence, 215 residues long: FGFR1 oncogene partner 2 homolog (215 aa).

2 coiled-coil regions span residues isoleucine 5–tyrosine 104 and lysine 161–glutamate 185. The interval aspartate 194–asparagine 215 is disordered. Positions glutamate 197–asparagine 215 are enriched in polar residues.

Belongs to the SIKE family.

The protein localises to the cytoplasm. May be involved in wound healing pathway. The polypeptide is FGFR1 oncogene partner 2 homolog (FGFR1OP2) (Pongo abelii (Sumatran orangutan)).